A 347-amino-acid polypeptide reads, in one-letter code: Dihydroorotase (347 aa).

Residues His13 and His15 each coordinate Zn(2+). Substrate is bound by residues 15-17 (HLR) and Asn41. Residues Lys99, His136, and His174 each coordinate Zn(2+). Lys99 carries the post-translational modification N6-carboxylysine. His136 lines the substrate pocket. Leu219 serves as a coordination point for substrate. Zn(2+) is bound at residue Asp247. Asp247 is an active-site residue. 2 residues coordinate substrate: His251 and Ala263.

It belongs to the metallo-dependent hydrolases superfamily. DHOase family. Class II DHOase subfamily. As to quaternary structure, homodimer. Zn(2+) serves as cofactor.

The enzyme catalyses (S)-dihydroorotate + H2O = N-carbamoyl-L-aspartate + H(+). It functions in the pathway pyrimidine metabolism; UMP biosynthesis via de novo pathway; (S)-dihydroorotate from bicarbonate: step 3/3. Functionally, catalyzes the reversible cyclization of carbamoyl aspartate to dihydroorotate. The sequence is that of Dihydroorotase from Sinorhizobium medicae (strain WSM419) (Ensifer medicae).